Consider the following 726-residue polypeptide: Long-chain-fatty-acid--CoA ligase ACSBG1 (726 aa).

The segment at 1–39 (MPDSRAAPQESLLDASLGTTQENVGTSSLTDGQTLSKEP) is disordered. Residues 17-36 (LGTTQENVGTSSLTDGQTLS) show a composition bias toward polar residues. S36 carries the post-translational modification Phosphoserine. A Phosphotyrosine modification is found at Y641. The disordered stretch occupies residues 707 to 726 (SKQGSSLPGFSLRWQTGASS).

The protein belongs to the ATP-dependent AMP-binding enzyme family. Bubblegum subfamily.

The protein resides in the cytoplasm. The protein localises to the cytoplasmic vesicle. It is found in the microsome. Its subcellular location is the endoplasmic reticulum. It localises to the cell membrane. The enzyme catalyses a long-chain fatty acid + ATP + CoA = a long-chain fatty acyl-CoA + AMP + diphosphate. It carries out the reaction (E)-hexadec-2-enoate + ATP + CoA = (2E)-hexadecenoyl-CoA + AMP + diphosphate. It catalyses the reaction hexadecanoate + ATP + CoA = hexadecanoyl-CoA + AMP + diphosphate. Functionally, catalyzes the conversion of fatty acids such as long-chain and very long-chain fatty acids to their active form acyl-CoAs for both synthesis of cellular lipids, and degradation via beta-oxidation. Can activate diverse saturated, monosaturated and polyunsaturated fatty acids. In Bos taurus (Bovine), this protein is Long-chain-fatty-acid--CoA ligase ACSBG1.